The primary structure comprises 324 residues: NADH-ubiquinone oxidoreductase chain 1 (324 aa).

Transmembrane regions (helical) follow at residues 9–29 (VLNPLAYIVPVLLAVAFLTLL), 75–95 (FLFLATPMLALTLALTLWAPM), 106–126 (LGVLFVLALSSLAVYSILGSG), 146–166 (ISYEVSLGLILLSVIIFTGGF), 177–197 (SIWLVVPAWPLAALWYISTLA), 237–257 (ILLMNTLSAILFLGATHIPAL), 259–279 (ELTAMNLMTKAALLSVVFLWV), and 299–319 (FLPMTLALVLWHLALPIALAG).

The protein belongs to the complex I subunit 1 family.

The protein localises to the mitochondrion inner membrane. The catalysed reaction is a ubiquinone + NADH + 5 H(+)(in) = a ubiquinol + NAD(+) + 4 H(+)(out). Functionally, core subunit of the mitochondrial membrane respiratory chain NADH dehydrogenase (Complex I) that is believed to belong to the minimal assembly required for catalysis. Complex I functions in the transfer of electrons from NADH to the respiratory chain. The immediate electron acceptor for the enzyme is believed to be ubiquinone. This chain is NADH-ubiquinone oxidoreductase chain 1 (MT-ND1), found in Thymallus arcticus (Arctic grayling).